The chain runs to 345 residues: Sesquiterpene synthase GALMADRAFT_104215 (345 aa).

Mg(2+)-binding residues include Asp-91, Asn-226, Ser-230, and Glu-234. A DDXXD motif motif is present at residues 91-95; the sequence is DEFTD. The (2E,6E)-farnesyl diphosphate site is built by Arg-316 and Tyr-317.

The protein belongs to the terpene synthase family. Mg(2+) serves as cofactor.

The enzyme catalyses (2E,6E)-farnesyl diphosphate = beta-gurjunene + diphosphate. Terpene cyclase that catalyzes the cyclization of farnesyl diphosphate (FPP) to beta-gurjunene. The polypeptide is Sesquiterpene synthase GALMADRAFT_104215 (Galerina marginata (strain CBS 339.88)).